Reading from the N-terminus, the 70-residue chain is Large ribosomal subunit protein bL31 (70 aa).

The Zn(2+) site is built by Cys17, Cys19, Cys37, and Cys40.

The protein belongs to the bacterial ribosomal protein bL31 family. Type A subfamily. Part of the 50S ribosomal subunit. Zn(2+) serves as cofactor.

Functionally, binds the 23S rRNA. The protein is Large ribosomal subunit protein bL31 of Clostridium acetobutylicum (strain ATCC 824 / DSM 792 / JCM 1419 / IAM 19013 / LMG 5710 / NBRC 13948 / NRRL B-527 / VKM B-1787 / 2291 / W).